Consider the following 323-residue polypeptide: MAALIAENFRFLSLFFKSKDVMIFNGLVALGTVGSQELFSVVAFHCPCSPARNYLYGLTAIGVPALALFLIGVILNNHTWNLVAECQYRRAKNCSAAPNFLLLSSILGRAAVAPVTWSVISLLRGEAYVCALSEFVDPSSLTAGDKGFPPAHATEVLARFPCGEGPANLSSFREEVSRRLKYESQLFGWLLIGVVAILVFLTKCLKHYCSPLSYRQEAYWAQYRTNEDQLFQRTAEVHSRVLAANNVRRFFGFVALNKDDEELVAKFPVEGTQPRPQWNAITGVYLYRENQGLPLYSRLHKWAQGLTGNGTAPDNVEMALLTA.

Residues 1–21 (MAALIAENFRFLSLFFKSKDV) lie on the Cytoplasmic side of the membrane. Residues 14 to 39 (LFFKSKDVMIFNGLVALGTVGSQELF) form a central pore region. A helical transmembrane segment spans residues 22-43 (MIFNGLVALGTVGSQELFSVVA). Topologically, residues 44–52 (FHCPCSPAR) are extracellular. Cystine bridges form between Cys46–Cys130 and Cys48–Cys162. Residues 53–76 (NYLYGLTAIGVPALALFLIGVILN) form a helical membrane-spanning segment. Topologically, residues 77–101 (NHTWNLVAECQYRRAKNCSAAPNFL) are cytoplasmic. The helical transmembrane segment at 102-132 (LLSSILGRAAVAPVTWSVISLLRGEAYVCAL) threads the bilayer. Residues 133 to 179 (SEFVDPSSLTAGDKGFPPAHATEVLARFPCGEGPANLSSFREEVSRR) are Extracellular-facing. The hemichannel docking stretch occupies residues 145–152 (DKGFPPAH). A helical membrane pass occupies residues 180 to 206 (LKYESQLFGWLLIGVVAILVFLTKCLK). The Cytoplasmic portion of the chain corresponds to 207–323 (HYCSPLSYRQ…DNVEMALLTA (117 aa)). Residues 214-251 (YRQEAYWAQYRTNEDQLFQRTAEVHSRVLAANNVRRFF) form an intersubunit interaction region.

Belongs to the CALHM family. In terms of assembly, homo-undecamer. Two undecameric hemichannels can assemble in a head-to-head manner to form a gap junction. As to expression, neuron, astrocyte, and microglia.

Its subcellular location is the cell membrane. The catalysed reaction is ATP(in) = ATP(out). Inhibited by divalent cations such as Co(2+) and Ni(2+). In terms of biological role, pore-forming subunit of Ca(2+) homeostasis modulator channels. Mediates ATP release from astrocytes and ATP-induced Ca(2+) influx in microglia thus regulating neuronal ATP and Ca(2+) homeostasis, synaptic transmission and neuroinflammatory response. May form intercellular gap junctions. The gating mechanism remains unknown. The chain is Calcium homeostasis modulator protein 2 from Mus musculus (Mouse).